The primary structure comprises 87 residues: Large ribosomal subunit protein bL27 (87 aa).

Belongs to the bacterial ribosomal protein bL27 family.

The sequence is that of Large ribosomal subunit protein bL27 from Renibacterium salmoninarum (strain ATCC 33209 / DSM 20767 / JCM 11484 / NBRC 15589 / NCIMB 2235).